Reading from the N-terminus, the 1095-residue chain is Solute carrier family 12 member 1 (1095 aa).

The Cytoplasmic segment spans residues 1 to 173 (MSVNIPSNSV…EEDVTGVVKF (173 aa)). The RFXV motif motif lies at 16-19 (RFQV). Residues 26–45 (HGSGAAMSDSTDPPHYEETS) are disordered. Residues Ser-57 and Ser-87 each carry the phosphoserine modification. Residues Thr-91, Thr-96, Thr-101, and Thr-114 each carry the phosphothreonine modification. The residue at position 116 (Ser-116) is a Phosphoserine. Position 126 is a phosphoserine; by AMPK (Ser-126). The residue at position 144 (Ser-144) is a Phosphoserine. A helical membrane pass occupies residues 174 to 194 (GWVKGVLVRCMLNIWGVMLFI). Residues 195–197 (RLS) lie on the Extracellular side of the membrane. Residues 198–218 (WIVGEAGIGLGVIIIGLSVVV) traverse the membrane as a helical segment. The Cytoplasmic segment spans residues 219–255 (TTLTGISMSAICTNGVVRGGGAYYLISRSLGPEFGGS). The chain crosses the membrane as a helical span at residues 256 to 276 (IGLIFRFANAVRVAMYVVGFA). Residues 277–298 (ETVVDLLKESDSMMVDPTNDIR) lie on the Extracellular side of the membrane. The chain crosses the membrane as a helical span at residues 299-319 (IIGSITVVILLGISVAGMEWE). Topologically, residues 320-323 (AKAQ) are cytoplasmic. The chain crosses the membrane as a helical span at residues 324–344 (VILLVILLIGIANFFIGTVIP). Topologically, residues 345–375 (SNNEKKSRGFFNYQASIFAENFGPSFTEGEG) are extracellular. A helical transmembrane segment spans residues 376-396 (FFSVFAIFFPAATGILAGANI). The Cytoplasmic segment spans residues 397–413 (SGDLEDPQDAIPRGTML). The helical transmembrane segment at 414–434 (AIFITTVAYIGVAICVRACVV) threads the bilayer. Residues 435-546 (RDATGSMNDT…NNEPLRGYFL (112 aa)) lie on the Extracellular side of the membrane. 2 N-linked (GlcNAc...) asparagine glycosylation sites follow: Asn-442 and Asn-452. The next 2 membrane-spanning stretches (helical) occupy residues 547–567 (TFVI…APII) and 568–588 (SNFF…ASYA). Topologically, residues 589–605 (KSPGWRPAYGIYNMWVS) are extracellular. A helical transmembrane segment spans residues 606-626 (LFGAILCCAVMFVINWWAAVI). The Cytoplasmic segment spans residues 627–1095 (TYVIELFLYI…NHKNVLTFYS (469 aa)).

It belongs to the SLC12A transporter family. As to quaternary structure, when phosphorylated, interacts with PPP3CB. Phosphorylated at Ser-87, Thr-96 and Thr-101 by OXSR1/OSR1 and STK39/SPAK downstream of WNK kinases (WNK1, WNK2, WNK3 or WNK4), promoting its activity. In terms of tissue distribution, expressed predominantly in kidney (at protein level).

It is found in the apical cell membrane. The enzyme catalyses K(+)(out) + 2 chloride(out) + Na(+)(out) = K(+)(in) + 2 chloride(in) + Na(+)(in). With respect to regulation, activated following phosphorylation by OXSR1/OSR1 and STK39/SPAK downstream of WNK kinases (WNK1, WNK2, WNK3 or WNK4). Functionally, renal sodium, potassium and chloride ion cotransporter that mediates the transepithelial NaCl reabsorption in the thick ascending limb and plays an essential role in the urinary concentration and volume regulation. Electrically silent transporter system. The chain is Solute carrier family 12 member 1 (Slc12a1) from Rattus norvegicus (Rat).